The primary structure comprises 173 residues: Peptide methionine sulfoxide reductase MsrA (173 aa).

Residue cysteine 10 is part of the active site.

This sequence belongs to the MsrA Met sulfoxide reductase family.

The enzyme catalyses L-methionyl-[protein] + [thioredoxin]-disulfide + H2O = L-methionyl-(S)-S-oxide-[protein] + [thioredoxin]-dithiol. It catalyses the reaction [thioredoxin]-disulfide + L-methionine + H2O = L-methionine (S)-S-oxide + [thioredoxin]-dithiol. Functionally, has an important function as a repair enzyme for proteins that have been inactivated by oxidation. Catalyzes the reversible oxidation-reduction of methionine sulfoxide in proteins to methionine. This Acinetobacter baumannii (strain AB307-0294) protein is Peptide methionine sulfoxide reductase MsrA.